We begin with the raw amino-acid sequence, 90 residues long: HssA/B-like protein 4 (90 aa).

The protein belongs to the hssA/B family.

The sequence is that of HssA/B-like protein 4 (hssl4) from Dictyostelium discoideum (Social amoeba).